A 232-amino-acid polypeptide reads, in one-letter code: 7-cyano-7-deazaguanine synthase 2 (232 aa).

Phe-9 to Leu-19 contacts ATP. 4 residues coordinate Zn(2+): Cys-189, Cys-198, Cys-201, and Cys-204.

It belongs to the QueC family. The cofactor is Zn(2+).

The enzyme catalyses 7-carboxy-7-deazaguanine + NH4(+) + ATP = 7-cyano-7-deazaguanine + ADP + phosphate + H2O + H(+). Its pathway is purine metabolism; 7-cyano-7-deazaguanine biosynthesis. Its function is as follows. Catalyzes the ATP-dependent conversion of 7-carboxy-7-deazaguanine (CDG) to 7-cyano-7-deazaguanine (preQ(0)). In Pseudomonas fluorescens (strain ATCC BAA-477 / NRRL B-23932 / Pf-5), this protein is 7-cyano-7-deazaguanine synthase 2.